A 205-amino-acid polypeptide reads, in one-letter code: Inosine triphosphate pyrophosphatase (205 aa).

Position 20–25 (20–25 (TGNAKK)) interacts with ITP. Glutamate 48 is a Mg(2+) binding site. ITP-binding positions include lysine 60, 76-77 (DT), lysine 93, 152-155 (FGWD), lysine 175, and 180-181 (HR).

The protein belongs to the HAM1 NTPase family. In terms of assembly, homodimer. Requires Mg(2+) as cofactor. The cofactor is Mn(2+).

Its subcellular location is the cytoplasm. The enzyme catalyses ITP + H2O = IMP + diphosphate + H(+). It carries out the reaction dITP + H2O = dIMP + diphosphate + H(+). It catalyses the reaction XTP + H2O = XMP + diphosphate + H(+). Its function is as follows. Pyrophosphatase that hydrolyzes non-canonical purine nucleotides such as inosine triphosphate (ITP), deoxyinosine triphosphate (dITP) or xanthosine 5'-triphosphate (XTP) to their respective monophosphate derivatives. The enzyme does not distinguish between the deoxy- and ribose forms. Probably excludes non-canonical purines from RNA and DNA precursor pools, thus preventing their incorporation into RNA and DNA and avoiding chromosomal lesions. This is Inosine triphosphate pyrophosphatase from Oryza sativa subsp. japonica (Rice).